The following is a 413-amino-acid chain: Peptidase T (413 aa).

His82 contacts Zn(2+). Residue Asp84 is part of the active site. A Zn(2+)-binding site is contributed by Asp144. Glu178 (proton acceptor) is an active-site residue. The Zn(2+) site is built by Glu179, Asp201, and His383.

The protein belongs to the peptidase M20B family. As to quaternary structure, homotrimer. Zn(2+) is required as a cofactor.

Its subcellular location is the cytoplasm. It catalyses the reaction Release of the N-terminal residue from a tripeptide.. Totally inhibited by EDTA, EGTA, and 1,10-phenanthroline. Strongly inhibited by divalent cations such as Cu(2+), Cd(2+), Co(2+) and Mn(2+). Partially inhibited by the reducing agents 2-mercaptoethanol and dithiothreitol. In terms of biological role, cleaves the N-terminal amino acid of tripeptides. Shows broad substrate specificity, exhibiting maximum activity against hydrophobic tripeptides, with the highest activity for Met-Gly-Gly. Therefore this enzyme may play an important role in flavor formation during cheese ripening. Is also able to slowly hydrolyze some hydrophobic dipeptides, but displays no activity against tetrapeptides and the tripeptide Phe-Gly-Gly. The polypeptide is Peptidase T (pepT) (Lactobacillus helveticus (Lactobacillus suntoryeus)).